Reading from the N-terminus, the 192-residue chain is Lipid A acyltransferase PagP (192 aa).

A signal peptide spans 1 to 29; that stretch reads MVVNVVIVAKKYFLFITLLIIQVSLPAHA. Catalysis depends on residues His-64, Asp-107, and Ser-108.

It belongs to the lipid A palmitoyltransferase family. In terms of assembly, homodimer.

It localises to the cell outer membrane. The enzyme catalyses a lipid A + a 1,2-diacyl-sn-glycero-3-phosphocholine = a hepta-acyl lipid A + a 2-acyl-sn-glycero-3-phosphocholine. It catalyses the reaction a lipid IVA + a 1,2-diacyl-sn-glycero-3-phosphocholine = a lipid IVB + a 2-acyl-sn-glycero-3-phosphocholine. The catalysed reaction is a lipid IIA + a 1,2-diacyl-sn-glycero-3-phosphocholine = a lipid IIB + a 2-acyl-sn-glycero-3-phosphocholine. In terms of biological role, transfers a fatty acid residue from the sn-1 position of a phospholipid to the N-linked hydroxyfatty acid chain on the proximal unit of lipid A or its precursors. The polypeptide is Lipid A acyltransferase PagP (Citrobacter rodentium (strain ICC168) (Citrobacter freundii biotype 4280)).